Reading from the N-terminus, the 343-residue chain is UDP-3-O-acylglucosamine N-acyltransferase (343 aa).

His-248 serves as the catalytic Proton acceptor.

It belongs to the transferase hexapeptide repeat family. LpxD subfamily. Homotrimer.

The catalysed reaction is a UDP-3-O-[(3R)-3-hydroxyacyl]-alpha-D-glucosamine + a (3R)-hydroxyacyl-[ACP] = a UDP-2-N,3-O-bis[(3R)-3-hydroxyacyl]-alpha-D-glucosamine + holo-[ACP] + H(+). Its pathway is bacterial outer membrane biogenesis; LPS lipid A biosynthesis. Catalyzes the N-acylation of UDP-3-O-acylglucosamine using 3-hydroxyacyl-ACP as the acyl donor. Is involved in the biosynthesis of lipid A, a phosphorylated glycolipid that anchors the lipopolysaccharide to the outer membrane of the cell. The polypeptide is UDP-3-O-acylglucosamine N-acyltransferase (Microcystis aeruginosa (strain NIES-843 / IAM M-2473)).